The chain runs to 570 residues: Serine/threonine-protein kinase Pink1, mitochondrial (570 aa).

Residues Met-1–Ala-5 constitute a mitochondrion transit peptide. Residues Val-6–Arg-96 are Mitochondrial intermembrane-facing. A helical transmembrane segment spans residues Ile-97 to Leu-120. Residues Thr-121–Asp-570 lie on the Cytoplasmic side of the membrane. Residues Leu-162–Leu-484 form the Protein kinase domain. Lys-196 is a binding site for ATP. The residue at position 205 (Ser-205) is a Phosphoserine; by autocatalysis. Residue Glu-217 participates in Mg(2+) binding. ATP contacts are provided by Lys-295, Tyr-297, and Asn-300. Asp-337 (proton acceptor) is an active-site residue. Residue Asp-341 participates in ATP binding. Positions 342 and 359 each coordinate Mg(2+). Asp-359 lines the ATP pocket. The residue at position 377 (Ser-377) is a Phosphoserine; by autocatalysis. Thr-386 bears the Phosphothreonine; by autocatalysis mark. Thr-530 is modified (phosphothreonine).

This sequence belongs to the protein kinase superfamily. Ser/Thr protein kinase family. Requires Mg(2+) as cofactor. Proteolytically cleaved. In healthy cells, the precursor is continuously imported into mitochondria where it is proteolytically cleaved into its short form by the mitochondrial rhomboid protease rho-7 (TcasGA2_TC013516). The short form is then released into the cytosol where it rapidly undergoes proteasome-dependent degradation. In unhealthy cells, when cellular stress conditions lead to the loss of mitochondrial membrane potential, mitochondrial import is impaired leading to the precursor accumulating on the outer mitochondrial membrane (OMM). In terms of processing, autophosphorylated on Ser-205, which activates kinase activity and is required for substrate recognition. Loss of mitochondrial membrane potential results in the precursor accumulating on the outer mitochondrial membrane (OMM) where it is activated by autophosphorylation at Ser-205. Autophosphorylation is sufficient and essential for selective recruitment of park to depolarized mitochondria, likely via Pink1-dependent phosphorylation of polyubiquitin chains. Also autophosphorylated at Ser-377, Thr-386 and possibly Thr-530. Another report found evidence of autophosphorylation at Ser-154, Thr-186, Thr-218, Ser-267 and Thr-530, as well as a number of other minor sites, but determined that phosphorylation at these sites is not required for enzyme activity and may not occur in vivo.

The protein resides in the mitochondrion outer membrane. It localises to the mitochondrion inner membrane. Its subcellular location is the cytoplasm. It is found in the cytosol. It catalyses the reaction L-seryl-[protein] + ATP = O-phospho-L-seryl-[protein] + ADP + H(+). The enzyme catalyses L-threonyl-[protein] + ATP = O-phospho-L-threonyl-[protein] + ADP + H(+). Functionally, acts as a serine/threonine-protein kinase. Exhibits a substrate preference for proline at position P+1 and a general preference at several residues for basic residues such as arginine. Also exhibits moderate preferences for a phosphotyrosine at position P-3 and a tryptophan at P-5. Critical to mitochondrial homeostasis it mediates several pathways that maintain mitochondrial health and function. Protects against mitochondrial dysfunction during cellular stress by phosphorylating mitochondrial proteins such as park and likely Drp1, to coordinate mitochondrial quality control mechanisms that remove and replace dysfunctional mitochondrial components. Depending on the severity of mitochondrial damage and/or dysfunction, activity ranges from preventing apoptosis and stimulating mitochondrial biogenesis to regulating mitochondrial dynamics and eliminating severely damaged mitochondria via mitophagy. Appears to be particularly important in maintaining the physiology and function of cells with high energy demands that are undergoing stress or altered metabolic environment, including spermatids, muscle cells and neurons such as the dopaminergic (DA) neurons. Mediates the translocation and activation of park at the outer membrane (OMM) of dysfunctional/depolarized mitochondria. At the OMM of damaged mitochondria, phosphorylates pre-existing polyubiquitin chains, the Pink1-phosphorylated polyubiquitin then recruits park from the cytosol to the OMM where park is fully activated by phosphorylation at 'Ser-80' by Pink1. When cellular stress results in irreversible mitochondrial damage, functions with park to promote the clearance of dysfunctional and/or depolarized mitochondria by selective autophagy (mitophagy). The Pink1-park pathway also promotes fission and/or inhibits fusion of damaged mitochondria, by phosphorylating and thus promoting the park-dependent degradation of proteins involved in mitochondrial fusion/fission such as Marf, Opa1 and fzo. This prevents the refusion of unhealthy mitochondria with the mitochondrial network or initiates mitochondrial fragmentation facilitating their later engulfment by autophagosomes. Also likely to promote mitochondrial fission independently of park and Atg7-mediated mitophagy, via the phosphorylation and activation of Drp1. Regulates motility of damaged mitochondria by phosphorylating Miro which likely promotes its park-dependent degradation by the proteasome; in motor neurons, this inhibits mitochondrial intracellular anterograde transport along the axons which probably increases the chance of the mitochondria being eliminated in the soma. The Pink1-park pathway is also involved in mitochondrial regeneration processes such as promoting mitochondrial biogenesis, activating localized mitochondrial repair, promoting selective turnover of mitochondrial proteins and initiating the mitochondrial import of endogenous proteins. Involved in mitochondrial biogenesis by promoting the park-dependent ubiquitination of transcriptional repressor Paris which leads to its subsequent proteasomal degradation and allows activation of the transcription factor srl. Functions with park to promote localized mitochondrial repair by activating the translation of specific nuclear-encoded mitochondrial RNAs (nc-mtRNAs) on the mitochondrial surface, including several key electron transport chain component nc-mtRNAs. During oogenesis, phosphorylates and inactivates larp on the membrane of defective mitochondria, thus impairing local translation and mtDNA replication and consequently, reducing transmission of deleterious mtDNA mutations to the mature oocyte. Phosphorylates the mitochondrial acyl-CoA dehydrogenase Mcad, and appears to be important for maintaining fatty acid and amino acid metabolism via a mechanism that is independent of it's role in maintaining production of ATP. This chain is Serine/threonine-protein kinase Pink1, mitochondrial, found in Tribolium castaneum (Red flour beetle).